A 140-amino-acid chain; its full sequence is ATP synthase epsilon chain, chloroplastic (140 aa).

This sequence belongs to the ATPase epsilon chain family. F-type ATPases have 2 components, CF(1) - the catalytic core - and CF(0) - the membrane proton channel. CF(1) has five subunits: alpha(3), beta(3), gamma(1), delta(1), epsilon(1). CF(0) has three main subunits: a, b and c.

It is found in the plastid. It localises to the chloroplast thylakoid membrane. Functionally, produces ATP from ADP in the presence of a proton gradient across the membrane. The sequence is that of ATP synthase epsilon chain, chloroplastic from Panax ginseng (Korean ginseng).